We begin with the raw amino-acid sequence, 107 residues long: UPF0145 protein CKO_02237 (107 aa).

It belongs to the UPF0145 family.

The protein is UPF0145 protein CKO_02237 of Citrobacter koseri (strain ATCC BAA-895 / CDC 4225-83 / SGSC4696).